Reading from the N-terminus, the 95-residue chain is Cell division protein FtsB (95 aa).

Residues 1–3 (MRW) lie on the Cytoplasmic side of the membrane. The chain crosses the membrane as a helical span at residues 4–21 (VLAGLTALLLWLQGLLWF). Over 22–95 (GEGGLNDVRG…QIIEREDDAR (74 aa)) the chain is Periplasmic. Residues 26–76 (LNDVRGLSRSVEAQREEVDRLRQRNQALEAEVNDLKTGLEALEERARSELG) adopt a coiled-coil conformation.

This sequence belongs to the FtsB family. As to quaternary structure, part of a complex composed of FtsB, FtsL and FtsQ.

The protein resides in the cell inner membrane. Its function is as follows. Essential cell division protein. May link together the upstream cell division proteins, which are predominantly cytoplasmic, with the downstream cell division proteins, which are predominantly periplasmic. This is Cell division protein FtsB from Alkalilimnicola ehrlichii (strain ATCC BAA-1101 / DSM 17681 / MLHE-1).